A 121-amino-acid chain; its full sequence is UPF0344 protein BT9727_1053 (121 aa).

A run of 4 helical transmembrane segments spans residues 6-26 (ITAW…YSAG), 38-58 (LMYI…MKTA), 65-85 (WYGL…MVLV), and 92-112 (ATGA…YLGL).

The protein belongs to the UPF0344 family.

It localises to the cell membrane. This is UPF0344 protein BT9727_1053 from Bacillus thuringiensis subsp. konkukian (strain 97-27).